Reading from the N-terminus, the 230-residue chain is Small ribosomal subunit protein uS3 (230 aa).

Positions 39–107 (VRNYLFKKLI…PVHINIEEIK (69 aa)) constitute a KH type-2 domain.

The protein belongs to the universal ribosomal protein uS3 family. Part of the 30S ribosomal subunit. Forms a tight complex with proteins S10 and S14.

Functionally, binds the lower part of the 30S subunit head. Binds mRNA in the 70S ribosome, positioning it for translation. The chain is Small ribosomal subunit protein uS3 from Vesicomyosocius okutanii subsp. Calyptogena okutanii (strain HA).